The primary structure comprises 96 residues: Co-chaperonin GroES (96 aa).

This sequence belongs to the GroES chaperonin family. Heptamer of 7 subunits arranged in a ring. Interacts with the chaperonin GroEL.

The protein resides in the cytoplasm. In terms of biological role, together with the chaperonin GroEL, plays an essential role in assisting protein folding. The GroEL-GroES system forms a nano-cage that allows encapsulation of the non-native substrate proteins and provides a physical environment optimized to promote and accelerate protein folding. GroES binds to the apical surface of the GroEL ring, thereby capping the opening of the GroEL channel. The protein is Co-chaperonin GroES of Legionella micdadei (Tatlockia micdadei).